The sequence spans 302 residues: AT-hook motif nuclear-localized protein 29 (302 aa).

Residues 1–95 (MDGGYDQSGG…KPPVIVTRDS (95 aa)) form a disordered region. Over residues 32–44 (QLHPLPQPQPQPQ) the composition is skewed to pro residues. Positions 72–84 (KRPRGRPPGSKNK) form a DNA-binding region, a.T hook. Residues 96-241 (PNVLRSHVLE…DEGGEGGEGG (146 aa)) form the PPC domain. Residues 164 to 169 (GRFEIL) are required for the binding to non-AHL interactors. Positions 229 to 279 (PLEDEGGEGGEGGEVGEGGGGEGGPPPATSSSPPSGAGQGQLRGNMSGYDQ) are disordered. Residues 237-251 (GGEGGEVGEGGGGEG) are compositionally biased toward gly residues.

Homodimer. Interacts with AHL5, AHL12, AHL25, AHL27, TCP4, TCP13 and EF114. Expressed in the hypocotyl and the vascular tissue of seedling.

The protein resides in the nucleus. In terms of biological role, transcription factor that specifically binds AT-rich DNA sequences related to the nuclear matrix attachment regions (MARs). Acts redundantly with AHL18, AHL22 and AHL27 in the regulation of flowering and regulation of the hypocotyl elongation. Acts redundantly with AHL27/ESC to modulate hypocotyl growth inhibition in response to light. This is AT-hook motif nuclear-localized protein 29 from Arabidopsis thaliana (Mouse-ear cress).